The chain runs to 132 residues: DNA-directed RNA polymerase subunit omega (132 aa).

Positions 89-109 are disordered; the sequence is HSSESESIFNTSSQEEGTSFD. Over residues 96–105 the composition is skewed to polar residues; that stretch reads IFNTSSQEEG.

It belongs to the RNA polymerase subunit omega family. As to quaternary structure, the RNAP catalytic core consists of 2 alpha, 1 beta, 1 beta' and 1 omega subunit. When a sigma factor is associated with the core the holoenzyme is formed, which can initiate transcription.

The enzyme catalyses RNA(n) + a ribonucleoside 5'-triphosphate = RNA(n+1) + diphosphate. In terms of biological role, promotes RNA polymerase assembly. Latches the N- and C-terminal regions of the beta' subunit thereby facilitating its interaction with the beta and alpha subunits. In Bartonella tribocorum (strain CIP 105476 / IBS 506), this protein is DNA-directed RNA polymerase subunit omega.